The primary structure comprises 648 residues: Glutenin, high molecular weight subunit DY10 (648 aa).

An N-terminal signal peptide occupies residues 1 to 21; sequence MAKRLVLFAAVVIALVALTTA. The segment at 127-648 is disordered; that stretch reads YYPGVTSPRQ…EGGDALSASQ (522 aa). Low complexity-rich tracts occupy residues 141–166, 195–236, and 243–263; these read PGQA…QGQQ, QQPG…WQQG, and QQLG…GQQG. Over residues 264-274 the composition is skewed to polar residues; it reads HYPTSLQQPGQ. Low complexity-rich tracts occupy residues 284–353, 360–416, 459–502, 510–523, and 531–565; these read QQQP…GQQG, QQPG…GQQG, QQPG…PGQG, QGYY…PGQG, and QGHC…GQQG. The segment covering 578–592 has biased composition (gly residues); that stretch reads QQSGQGQQSGQGHQP. The segment covering 593-604 has biased composition (low complexity); the sequence is GQGQQSGQEQQG.

It belongs to the gliadin/glutenin family. As to quaternary structure, disulfide-bridge linked aggregates.

In terms of biological role, glutenins are high-molecular weight seed storage proteins of wheat endosperm. Thought to be responsible for the visco-elastic property of wheat dough. This is Glutenin, high molecular weight subunit DY10 (GLU-D1-2B) from Triticum aestivum (Wheat).